Reading from the N-terminus, the 275-residue chain is Elongation factor Ts (275 aa).

Residues 76 to 79 (TDFV) form an involved in Mg(2+) ion dislocation from EF-Tu region.

Belongs to the EF-Ts family.

It is found in the cytoplasm. Associates with the EF-Tu.GDP complex and induces the exchange of GDP to GTP. It remains bound to the aminoacyl-tRNA.EF-Tu.GTP complex up to the GTP hydrolysis stage on the ribosome. This is Elongation factor Ts from Mycobacterium avium (strain 104).